A 212-amino-acid polypeptide reads, in one-letter code: Large ribosomal subunit protein uL3 (212 aa).

Gln153 carries the N5-methylglutamine modification.

Belongs to the universal ribosomal protein uL3 family. As to quaternary structure, part of the 50S ribosomal subunit. Forms a cluster with proteins L14 and L19. Post-translationally, methylated by PrmB.

One of the primary rRNA binding proteins, it binds directly near the 3'-end of the 23S rRNA, where it nucleates assembly of the 50S subunit. This is Large ribosomal subunit protein uL3 from Marinobacter nauticus (strain ATCC 700491 / DSM 11845 / VT8) (Marinobacter aquaeolei).